Here is a 92-residue protein sequence, read N- to C-terminus: MAKRTKKVGIVGKYGTRYGASLRKTVKKMEITQHSKYTCQFCGKDAMKRQAVGIWGCKSCRKVVAGGAWVYSTMAAVTVRSAVRRLREMKES.

A C4-type zinc finger spans residues 39–60; it reads CQFCGKDAMKRQAVGIWGCKSC.

This sequence belongs to the eukaryotic ribosomal protein eL43 family.

This Cryptochiton stelleri (Giant gumboot chiton) protein is Large ribosomal subunit protein eL43 (RPL37A).